We begin with the raw amino-acid sequence, 184 residues long: Cytidylate kinase (184 aa).

Gly-8 to Thr-16 serves as a coordination point for ATP.

It belongs to the cytidylate kinase family. Type 2 subfamily.

It localises to the cytoplasm. It catalyses the reaction CMP + ATP = CDP + ADP. It carries out the reaction dCMP + ATP = dCDP + ADP. The polypeptide is Cytidylate kinase (Pyrobaculum calidifontis (strain DSM 21063 / JCM 11548 / VA1)).